A 207-amino-acid chain; its full sequence is LexA repressor (207 aa).

Residues 29 to 49 constitute a DNA-binding region (H-T-H motif); that stretch reads VREICSAVDLSSTSTVHGHLA. Active-site for autocatalytic cleavage activity residues include Ser-128 and Lys-166.

This sequence belongs to the peptidase S24 family. As to quaternary structure, homodimer.

It carries out the reaction Hydrolysis of Ala-|-Gly bond in repressor LexA.. In terms of biological role, represses a number of genes involved in the response to DNA damage (SOS response), including recA and lexA. In the presence of single-stranded DNA, RecA interacts with LexA causing an autocatalytic cleavage which disrupts the DNA-binding part of LexA, leading to derepression of the SOS regulon and eventually DNA repair. In Lactobacillus gasseri (strain ATCC 33323 / DSM 20243 / BCRC 14619 / CIP 102991 / JCM 1131 / KCTC 3163 / NCIMB 11718 / NCTC 13722 / AM63), this protein is LexA repressor.